The sequence spans 541 residues: Coiled-coil domain-containing protein 116 (541 aa).

The stretch at glutamine 79 to alanine 102 forms a coiled coil. A disordered region spans residues leucine 346 to asparagine 397. Positions aspartate 351 to threonine 363 are enriched in polar residues. Residues threonine 383–arginine 392 show a composition bias toward basic residues. Residue serine 394 is modified to Phosphoserine.

It is found in the cytoplasm. Its subcellular location is the cytoskeleton. The protein resides in the microtubule organizing center. The protein localises to the centrosome. The polypeptide is Coiled-coil domain-containing protein 116 (Ccdc116) (Mus musculus (Mouse)).